A 164-amino-acid chain; its full sequence is UPF0305 protein MTH_812 (164 aa).

Belongs to the UPF0305 family.

This is UPF0305 protein MTH_812 from Methanothermobacter thermautotrophicus (strain ATCC 29096 / DSM 1053 / JCM 10044 / NBRC 100330 / Delta H) (Methanobacterium thermoautotrophicum).